The chain runs to 424 residues: MADNDDLLDYEDEEQTETTAVENQEAPKKDVKGTYVSIHSSGFRDFLLKPEILRAIVDCGFEHPSEVQHECIPQAVLGMDILCQAKSGMGKTAVFVLATLQQLEPSDNNTCHVLVMCHTRELAFQISKEYERFSKYMPTVKVAVFFGGMAIQKDEETLKSGTPHIVVGTPGRILALIRNKKLNLKLLKHFVLDECDKMLEQLDMRRDVQEIFRSTPHGKQVMMFSATLSKDIRPVCKKFMQDPMEVYVDDEAKLTLHGLQQHYVNLKENEKNKKLFELLDVLEFNQVVIFVKSVQRCVALSQLLTEQNFPAIGIHRGMTQEERLNRYQQFKDFQKRILVATNLFGRGMDIERVNIVFNYDMPEDSDTYLHRVARAGRFGTKGLAITFVSDENDAKILNEVQDRFDVNISELPEEIDLSTYIEGR.

The segment covering 1–16 has biased composition (acidic residues); the sequence is MADNDDLLDYEDEEQT. Residues 1-27 form a disordered region; sequence MADNDDLLDYEDEEQTETTAVENQEAP. Residues 41–69 carry the Q motif motif; the sequence is SGFRDFLLKPEILRAIVDCGFEHPSEVQH. The Helicase ATP-binding domain occupies 72–246; it reads IPQAVLGMDI…KKFMQDPMEV (175 aa). 85–92 lines the ATP pocket; sequence AKSGMGKT. A DECD box motif is present at residues 193-196; it reads DECD. Residues 258-419 form the Helicase C-terminal domain; it reads GLQQHYVNLK…ELPEEIDLST (162 aa).

The protein belongs to the DEAD box helicase family. DECD subfamily. In terms of assembly, component of the spliceosome. Interacts with the exon junction complex.

It localises to the nucleus speckle. It catalyses the reaction ATP + H2O = ADP + phosphate + H(+). Functionally, required for mRNA export out of the nucleus. Probable RNA helicase that may regulate entry into mitosis by down-regulating the expression of other genes whose activity may be rate-limiting for entry into mitosis during embryogenesis. Binds to salivary gland chromosomes and modifies position effect variegation. Promotes an open chromatin structure that favors transcription during development by regulating the spread of heterochromatin. This Drosophila melanogaster (Fruit fly) protein is ATP-dependent RNA helicase WM6 (Hel25E).